Here is a 501-residue protein sequence, read N- to C-terminus: Sensor histidine kinase PdtaS (501 aa).

Positions 4-150 (LGDLLAEHTV…HLETAYRLCA (147 aa)) are GAF. The interval 179–291 (DGFIRLDVDG…TEVKRRDRAL (113 aa)) is PAS-like. The 196-residue stretch at 300–495 (EIHHRVKNNL…DVVLRVPVGR (196 aa)) folds into the Histidine kinase domain. At H303 the chain carries Phosphohistidine; by autocatalysis.

Post-translationally, autophosphorylated.

The protein resides in the cytoplasm. It carries out the reaction ATP + protein L-histidine = ADP + protein N-phospho-L-histidine.. Its function is as follows. Member of the two-component regulatory system PdtaR/PdtaS. This two-component system plays an essential role in mycobacterial adaptation to poor nutrient conditions. Nutrient deprivation results in increasing intracellular concentrations of cyclic diguanosine monophosphate (c-di-GMP), which binds to the PdtaS sensor and promotes its autophosphorylation, leading to the activation of the signaling cascade. The phosphate group is then transferred to PdtaR. In terms of biological role, in addition, the PdtaR/PdtaS two-component system controls copper and nitric oxide (NO) resistance downstream of the intramembrane protease Rip1. This coupled Rip1/PdtaS/PdtaR circuit controls NO resistance and acute lung infection in mice by relieving PdtaR/PdtaS-mediated repression of isonitrile chalkophore biosynthesis. Two signals are required to fully inactivate the PdtaR/PdtaS system and mediate NO resistance: a cytoplasmic inhibitory signal through the PdtaS kinase mediated by direct sensing of NO and the production of PPE1-5', an NO-induced small RNA, to sequester PdtaR. This is Sensor histidine kinase PdtaS (pdtaS) from Mycobacterium tuberculosis (strain CDC 1551 / Oshkosh).